The following is a 107-amino-acid chain: Class I hydrophobin 3 (107 aa).

The first 18 residues, 1–18 (MQFKVLAALVIGATLAAA), serve as a signal peptide directing secretion. Disulfide bonds link Cys-26–Cys-86, Cys-33–Cys-80, Cys-34–Cys-67, and Cys-87–Cys-100. Asn-35 and Asn-89 each carry an N-linked (GlcNAc...) asparagine glycan.

The protein belongs to the fungal hydrophobin family. In terms of assembly, self-assembles to form functional amyloid fibrils called rodlets. Self-assembly into fibrillar rodlets occurs spontaneously at hydrophobic:hydrophilic interfaces and the rodlets further associate laterally to form amphipathic monolayers.

It is found in the secreted. The protein resides in the cell wall. Functionally, aerial growth, conidiation, and dispersal of filamentous fungi in the environment rely upon a capability of their secreting small amphipathic proteins called hydrophobins (HPBs) with low sequence identity. Class I can self-assemble into an outermost layer of rodlet bundles on aerial cell surfaces, conferring cellular hydrophobicity that supports fungal growth, development and dispersal; whereas Class II form highly ordered films at water-air interfaces through intermolecular interactions but contribute nothing to the rodlet structure. Pnh3 is a class I hydrophobin that might be involved in the attachment of the hydrophilic wall of hyphae to the hydrophobic surface of wood under inorganic phosphate (Pi)-deficient conditions and enable the mycelium to degrade efficiently the components of wood and to acquire nutrients containing Pi. The chain is Class I hydrophobin 3 from Pholiota nameko.